Consider the following 211-residue polypeptide: MRLTAKQVTWLKVSLHLAGLLPFLWLVWAINHGGLGADPVKDIQHFTGRTALKFLLATLLITPLARYAKQPLLIRTRRLLGLWCFAWATLHLTSYALLELGVNNLALLGKELITRPYLTLGIISWVILLALAFTSTQAMQRKLGKHWQQLHNFVYLVAILAPIHYLWSVKIISPQPLIYAGLAVLLLALRYKKLLSLFNRLRKQAHNKLSL.

5 helical membrane passes run 17 to 37 (LAGL…GLGA), 82 to 102 (LWCF…ELGV), 116 to 136 (PYLT…FTST), 153 to 173 (FVYL…KIIS), and 178 to 198 (IYAG…LSLF).

It belongs to the MsrQ family. As to quaternary structure, heterodimer of a catalytic subunit (MsrP) and a heme-binding subunit (MsrQ). FMN serves as cofactor. It depends on heme b as a cofactor.

The protein resides in the cell inner membrane. Part of the MsrPQ system that repairs oxidized periplasmic proteins containing methionine sulfoxide residues (Met-O), using respiratory chain electrons. Thus protects these proteins from oxidative-stress damage caused by reactive species of oxygen and chlorine generated by the host defense mechanisms. MsrPQ is essential for the maintenance of envelope integrity under bleach stress, rescuing a wide series of structurally unrelated periplasmic proteins from methionine oxidation, including the primary periplasmic chaperone SurA and the lipoprotein Pal. MsrQ provides electrons for reduction to the reductase catalytic subunit MsrP, using the quinone pool of the respiratory chain. The sequence is that of Protein-methionine-sulfoxide reductase heme-binding subunit MsrQ from Shigella boydii serotype 4 (strain Sb227).